A 146-amino-acid polypeptide reads, in one-letter code: MAYYNHQNRILARGQIWNLIGETEGLDSGRRHPACAITISNYTLLLARILWEELPFLSHEQCFHTDIFICSVTSKHISVERMKEETVKAIEMVGKVLILVPLLASLVLLLYFNITGSSAEIGCGFCLGTVILAGIVLVGYSVVRSR.

2 helical membrane-spanning segments follow: residues 89–111 (AIEM…LLLY) and 121–143 (IGCG…YSVV).

Its subcellular location is the cell membrane. This is an uncharacterized protein from Archaeoglobus fulgidus (strain ATCC 49558 / DSM 4304 / JCM 9628 / NBRC 100126 / VC-16).